The following is a 175-amino-acid chain: Cytochrome c homolog (175 aa).

Over 1 to 8 (MSGKELNK) the chain is Cytoplasmic. Residues 9–29 (IVAAILFASLIAMMVGFVANI) traverse the membrane as a helical; Signal-anchor segment. At 30 to 175 (LYKPTLELQH…LFLKTYVHDK (146 aa)) the chain is on the periplasmic side. Heme c contacts are provided by Cys84, Cys87, His88, and Met150.

This sequence belongs to the cytochrome c family. Post-translationally, binds 1 heme c group covalently per subunit.

Its subcellular location is the cell membrane. Its function is as follows. May be involved in electron transfer from bc1 complex to aa3. This chain is Cytochrome c homolog (cycM), found in Rickettsia conorii (strain ATCC VR-613 / Malish 7).